The chain runs to 89 residues: Small ribosomal subunit protein uS15 (89 aa).

This sequence belongs to the universal ribosomal protein uS15 family. In terms of assembly, part of the 30S ribosomal subunit. Forms a bridge to the 50S subunit in the 70S ribosome, contacting the 23S rRNA.

One of the primary rRNA binding proteins, it binds directly to 16S rRNA where it helps nucleate assembly of the platform of the 30S subunit by binding and bridging several RNA helices of the 16S rRNA. Functionally, forms an intersubunit bridge (bridge B4) with the 23S rRNA of the 50S subunit in the ribosome. The polypeptide is Small ribosomal subunit protein uS15 (Chelativorans sp. (strain BNC1)).